A 258-amino-acid polypeptide reads, in one-letter code: 6-carboxyhexanoate--CoA ligase (258 aa).

The protein belongs to the BioW family. Homodimer. Mg(2+) is required as a cofactor.

It catalyses the reaction heptanedioate + ATP + CoA = 6-carboxyhexanoyl-CoA + AMP + diphosphate. Its pathway is metabolic intermediate metabolism; pimeloyl-CoA biosynthesis; pimeloyl-CoA from pimelate: step 1/1. In terms of biological role, catalyzes the transformation of pimelate into pimeloyl-CoA with concomitant hydrolysis of ATP to AMP. The polypeptide is 6-carboxyhexanoate--CoA ligase (Bacillus subtilis (strain BSn5)).